Reading from the N-terminus, the 117-residue chain is Iron-sulfur cluster insertion protein ErpA (117 aa).

3 residues coordinate iron-sulfur cluster: C45, C109, and C111.

This sequence belongs to the HesB/IscA family. Homodimer. Requires iron-sulfur cluster as cofactor.

Functionally, required for insertion of 4Fe-4S clusters for at least IspG. The protein is Iron-sulfur cluster insertion protein ErpA of Blochmanniella pennsylvanica (strain BPEN).